Consider the following 69-residue polypeptide: Brevinin-1CG5 (69 aa).

An N-terminal signal peptide occupies residues 1 to 22 (MFTLKKSLLLLFFLGTINLSLC). Positions 23 to 43 (EQERNAEEERRDDDEMDVEVE) are cleaved as a propeptide — removed in mature form. The cysteines at positions 63 and 69 are disulfide-linked.

The protein belongs to the frog skin active peptide (FSAP) family. Brevinin subfamily. Expressed by the skin glands.

It is found in the secreted. Functionally, antimicrobial peptide active against a variety of Gram-positive and Gram-negative bacterial strains. Has antifungal activity against C.albicans ATCC 10231 and a slime mold isolate. Has hemolytic activity against human erythrocytes. This Amolops chunganensis (Chungan torrent frog) protein is Brevinin-1CG5.